The sequence spans 345 residues: Glycerol-3-phosphate dehydrogenase [NAD(P)+] (345 aa).

Ser-11, Trp-12, His-32, Arg-33, and Lys-106 together coordinate NADPH. Sn-glycerol 3-phosphate contacts are provided by Lys-106, Gly-137, and Ser-139. Ala-141 serves as a coordination point for NADPH. Residues Lys-192, Asp-245, Ser-255, Arg-256, and Asn-257 each coordinate sn-glycerol 3-phosphate. The Proton acceptor role is filled by Lys-192. Position 256 (Arg-256) interacts with NADPH. 2 residues coordinate NADPH: Val-280 and Glu-282.

Belongs to the NAD-dependent glycerol-3-phosphate dehydrogenase family.

It localises to the cytoplasm. The catalysed reaction is sn-glycerol 3-phosphate + NAD(+) = dihydroxyacetone phosphate + NADH + H(+). It catalyses the reaction sn-glycerol 3-phosphate + NADP(+) = dihydroxyacetone phosphate + NADPH + H(+). Its pathway is membrane lipid metabolism; glycerophospholipid metabolism. Its function is as follows. Catalyzes the reduction of the glycolytic intermediate dihydroxyacetone phosphate (DHAP) to sn-glycerol 3-phosphate (G3P), the key precursor for phospholipid synthesis. The sequence is that of Glycerol-3-phosphate dehydrogenase [NAD(P)+] from Bacillus velezensis (strain DSM 23117 / BGSC 10A6 / LMG 26770 / FZB42) (Bacillus amyloliquefaciens subsp. plantarum).